The primary structure comprises 680 residues: Probable inactive DNA (cytosine-5)-methyltransferase DRM3 (680 aa).

The segment at 1 to 24 (MVKVEDDVEGSGINASVGDLRDAA) is disordered. Residues 45 to 86 (SSSSHVRSQFIGMGFSPMLVDRVLQKHGDRDSDTILEALLSQ) enclose the UBA 1 domain. Positions 91 to 113 (KSGSESGSLGDLFDSDNEENSSH) are disordered. One can recognise a UBA 2 domain in the interval 194–235 (SLFGVMDKTLHLLQMGFTEEEVSSVIDKAGPEATVLELADTI). The region spanning 336 to 663 (IRRNVRSDVA…QRVKHIMGRL (328 aa)) is the SAM-dependent MTase DRM-type domain.

Belongs to the class I-like SAM-binding methyltransferase superfamily. DRM-methyltransferase family.

It is found in the nucleus. Functionally, involved in de novo DNA methylation. Involved in RNA-directed DNA methylation (RdDM). The protein is Probable inactive DNA (cytosine-5)-methyltransferase DRM3 of Oryza sativa subsp. japonica (Rice).